Reading from the N-terminus, the 445-residue chain is Argininosuccinate synthase (445 aa).

Residues 17–25 (AFSGGLDTS) and alanine 43 each bind ATP. Position 99 (tyrosine 99) interacts with L-citrulline. Positions 129 and 131 each coordinate ATP. Residues threonine 131, asparagine 135, and aspartate 136 each coordinate L-aspartate. Asparagine 135 contacts L-citrulline. Aspartate 136 provides a ligand contact to ATP. Residues arginine 139 and serine 192 each contribute to the L-citrulline site. Aspartate 194 lines the ATP pocket. L-citrulline is bound by residues threonine 201, glutamate 203, and glutamate 280.

The protein belongs to the argininosuccinate synthase family. Type 2 subfamily. In terms of assembly, homotetramer.

The protein localises to the cytoplasm. The catalysed reaction is L-citrulline + L-aspartate + ATP = 2-(N(omega)-L-arginino)succinate + AMP + diphosphate + H(+). It participates in amino-acid biosynthesis; L-arginine biosynthesis; L-arginine from L-ornithine and carbamoyl phosphate: step 2/3. This is Argininosuccinate synthase from Burkholderia ambifaria (strain MC40-6).